Consider the following 315-residue polypeptide: Protein translocase subunit SecF (315 aa).

6 helical membrane-spanning segments follow: residues 12–32, 136–156, 166–186, 188–208, 247–267, and 271–291; these read AWIV…ISWA, ALFR…IIYL, VFAI…FAIF, LVGG…IIGF, SINT…FGGD, and FFAL…IFMA.

It belongs to the SecD/SecF family. SecF subfamily. As to quaternary structure, forms a complex with SecD. Part of the essential Sec protein translocation apparatus which comprises SecA, SecYEG and auxiliary proteins SecDF. Other proteins may also be involved.

The protein localises to the cell inner membrane. Functionally, part of the Sec protein translocase complex. Interacts with the SecYEG preprotein conducting channel. SecDF uses the proton motive force (PMF) to complete protein translocation after the ATP-dependent function of SecA. Its function is as follows. Probably participates in protein translocation into and across both the cytoplasmic and thylakoid membranes in cyanobacterial cells. The protein is Protein translocase subunit SecF of Synechocystis sp. (strain ATCC 27184 / PCC 6803 / Kazusa).